The following is a 285-amino-acid chain: Probable adenylate kinase 6, chloroplastic (285 aa).

The transit peptide at 1 to 33 (MAAISRAIRACAAAGSRRSMASSAKEVAAAGAR) directs the protein to the chloroplast. 63-68 (GVGKGT) provides a ligand contact to ATP. The segment at 83-112 (ATGDLVRDALASPGPFSEQLAEIVNNGKLV) is NMP. Residues T84, R89, 110–112 (KLV), 140–143 (GFPR), and Q147 contribute to the AMP site. The tract at residues 176–224 (GRRMCSQCGGNFNVASIDMEGENGGPRMYMPPLLPPPQCESKLITRPDD) is LID. ATP-binding positions include R177 and 186-187 (NF). AMP contacts are provided by R221 and R232.

It belongs to the adenylate kinase family.

It localises to the plastid. The protein localises to the chloroplast. It catalyses the reaction AMP + ATP = 2 ADP. Its function is as follows. Catalyzes the reversible transfer of the terminal phosphate group between ATP and AMP. Plays an important role in cellular energy homeostasis and in adenine nucleotide metabolism. The chain is Probable adenylate kinase 6, chloroplastic from Oryza sativa subsp. japonica (Rice).